Reading from the N-terminus, the 748-residue chain is Acyl-coenzyme A oxidase (748 aa).

Belongs to the acyl-CoA oxidase family. In terms of assembly, homooctamer. FAD serves as cofactor.

It localises to the peroxisome. The catalysed reaction is a 2,3-saturated acyl-CoA + O2 = a (2E)-enoyl-CoA + H2O2. It participates in lipid metabolism; peroxisomal fatty acid beta-oxidation. The polypeptide is Acyl-coenzyme A oxidase (POX1) (Saccharomyces cerevisiae (strain ATCC 204508 / S288c) (Baker's yeast)).